Consider the following 100-residue polypeptide: NADH-quinone oxidoreductase subunit K (100 aa).

A run of 3 helical transmembrane segments spans residues 1–21 (MIGLNHYLIVSGLLFCIGLAG), 28–48 (ILLLFFSTEIMLNAINIGFIA), and 64–84 (FIIAIAASEVAIGLGLVILWF).

This sequence belongs to the complex I subunit 4L family. NDH-1 is composed of 14 different subunits. Subunits NuoA, H, J, K, L, M, N constitute the membrane sector of the complex.

Its subcellular location is the cell inner membrane. The catalysed reaction is a quinone + NADH + 5 H(+)(in) = a quinol + NAD(+) + 4 H(+)(out). Its function is as follows. NDH-1 shuttles electrons from NADH, via FMN and iron-sulfur (Fe-S) centers, to quinones in the respiratory chain. The immediate electron acceptor for the enzyme in this species is believed to be ubiquinone. Couples the redox reaction to proton translocation (for every two electrons transferred, four hydrogen ions are translocated across the cytoplasmic membrane), and thus conserves the redox energy in a proton gradient. The chain is NADH-quinone oxidoreductase subunit K from Helicobacter pylori (strain G27).